The chain runs to 412 residues: Subtilisin-like protease 6 (412 aa).

A signal peptide spans 1 to 20; the sequence is MGFITKAIPIVLAALSTVNG. Positions 21-127 are excised as a propeptide; it reads ARILEAGPHA…VRATTNGTNL (107 aa). The 85-residue stretch at 36-120 folds into the Inhibitor I9 domain; sequence KYIVVMKKDV…FIEPDFVVRA (85 aa). N-linked (GlcNAc...) asparagine glycosylation is found at Asn123 and Asn126. The 278-residue stretch at 135–412 folds into the Peptidase S8 domain; the sequence is SWGLARVSTR…SKLIYNGSGK (278 aa). Active-site charge relay system residues include Asp167 and His198. 3 N-linked (GlcNAc...) asparagine glycosylation sites follow: Asn252, Asn264, and Asn325. The active-site Charge relay system is Ser358. Asn408 carries an N-linked (GlcNAc...) asparagine glycan.

This sequence belongs to the peptidase S8 family.

The protein localises to the secreted. Its function is as follows. Secreted subtilisin-like serine protease with keratinolytic activity that contributes to pathogenicity. The chain is Subtilisin-like protease 6 (SUB6) from Trichophyton verrucosum (Cattle ringworm fungus).